The following is a 227-amino-acid chain: tRNA (guanine-N(1)-)-methyltransferase (227 aa).

S-adenosyl-L-methionine is bound by residues Gly-112 and 132-137 (LGDFVL).

Belongs to the RNA methyltransferase TrmD family. Homodimer.

The protein localises to the cytoplasm. The catalysed reaction is guanosine(37) in tRNA + S-adenosyl-L-methionine = N(1)-methylguanosine(37) in tRNA + S-adenosyl-L-homocysteine + H(+). In terms of biological role, specifically methylates guanosine-37 in various tRNAs. In Gloeobacter violaceus (strain ATCC 29082 / PCC 7421), this protein is tRNA (guanine-N(1)-)-methyltransferase.